The primary structure comprises 124 residues: Small ribosomal subunit protein bS6 (124 aa).

The disordered stretch occupies residues 98-124; sequence EASPMLKAREERPRREDVREEAEEAAE. Residues 104-115 are compositionally biased toward basic and acidic residues; sequence KAREERPRREDV.

This sequence belongs to the bacterial ribosomal protein bS6 family.

Its function is as follows. Binds together with bS18 to 16S ribosomal RNA. The chain is Small ribosomal subunit protein bS6 from Tolumonas auensis (strain DSM 9187 / NBRC 110442 / TA 4).